Here is a 146-residue protein sequence, read N- to C-terminus: Large ribosomal subunit protein uL15 (146 aa).

The tract at residues 1–51 (MKLHELQPAPGSRKKAVRVGRGIGSGNGKTSGRGQKGQNARSGGGVRLGFE) is disordered. 2 stretches are compositionally biased toward gly residues: residues 21 to 35 (RGIG…GRGQ) and 42 to 51 (SGGGVRLGFE).

Belongs to the universal ribosomal protein uL15 family. Part of the 50S ribosomal subunit.

In terms of biological role, binds to the 23S rRNA. The protein is Large ribosomal subunit protein uL15 of Geobacillus kaustophilus (strain HTA426).